Reading from the N-terminus, the 248-residue chain is Protein canopy homolog 4 (248 aa).

The first 21 residues, 1 to 21, serve as a signal peptide directing secretion; that stretch reads MGPVRLGILLFLFLAVHEAWA. 3 cysteine pairs are disulfide-bonded: cysteine 38–cysteine 196, cysteine 41–cysteine 184, and cysteine 94–cysteine 156. The tract at residues 200-248 is disordered; sequence TWTGKEITDGEEKTEGEEEQEEEEEEEEEEGGDKMTKTGSHPKLDREDL. Residues 213 to 230 show a composition bias toward acidic residues; the sequence is TEGEEEQEEEEEEEEEEG. The span at 231–248 shows a compositional bias: basic and acidic residues; the sequence is GDKMTKTGSHPKLDREDL.

It belongs to the canopy family. As to quaternary structure, interacts with TLR4.

The protein localises to the secreted. Functionally, plays a role in the regulation of the cell surface expression of TLR4. The polypeptide is Protein canopy homolog 4 (CNPY4) (Homo sapiens (Human)).